A 212-amino-acid polypeptide reads, in one-letter code: Thymidylate kinase (212 aa).

Position 11–18 (11–18 (GPEGAGKT)) interacts with ATP.

This sequence belongs to the thymidylate kinase family.

The catalysed reaction is dTMP + ATP = dTDP + ADP. In terms of biological role, phosphorylation of dTMP to form dTDP in both de novo and salvage pathways of dTTP synthesis. The protein is Thymidylate kinase of Streptococcus pneumoniae serotype 19F (strain G54).